The sequence spans 204 residues: Small ribosomal subunit protein uS7 (204 aa).

An N-acetylmethionine modification is found at methionine 1. Threonine 2 carries the post-translational modification N-acetylthreonine; in 40S ribosomal protein S5, N-terminally processed. The residue at position 14 (threonine 14) is a Phosphothreonine. An N6-acetyllysine; alternate modification is found at lysine 47. Lysine 47 is covalently cross-linked (Glycyl lysine isopeptide (Lys-Gly) (interchain with G-Cter in SUMO2); alternate). Serine 142 carries the post-translational modification Phosphoserine.

This sequence belongs to the universal ribosomal protein uS7 family. Component of the small ribosomal subunit. Part of the small subunit (SSU) processome, composed of more than 70 proteins and the RNA chaperone small nucleolar RNA (snoRNA) U3.

Its subcellular location is the cytoplasm. It localises to the nucleus. The protein resides in the nucleolus. Functionally, component of the small ribosomal subunit. The ribosome is a large ribonucleoprotein complex responsible for the synthesis of proteins in the cell. Part of the small subunit (SSU) processome, first precursor of the small eukaryotic ribosomal subunit. During the assembly of the SSU processome in the nucleolus, many ribosome biogenesis factors, an RNA chaperone and ribosomal proteins associate with the nascent pre-rRNA and work in concert to generate RNA folding, modifications, rearrangements and cleavage as well as targeted degradation of pre-ribosomal RNA by the RNA exosome. The protein is Small ribosomal subunit protein uS7 (RPS5) of Bos taurus (Bovine).